Here is a 95-residue protein sequence, read N- to C-terminus: Glutamyl-tRNA(Gln) amidotransferase subunit C (95 aa).

Belongs to the GatC family. In terms of assembly, heterotrimer of A, B and C subunits.

The enzyme catalyses L-glutamyl-tRNA(Gln) + L-glutamine + ATP + H2O = L-glutaminyl-tRNA(Gln) + L-glutamate + ADP + phosphate + H(+). The catalysed reaction is L-aspartyl-tRNA(Asn) + L-glutamine + ATP + H2O = L-asparaginyl-tRNA(Asn) + L-glutamate + ADP + phosphate + 2 H(+). Allows the formation of correctly charged Asn-tRNA(Asn) or Gln-tRNA(Gln) through the transamidation of misacylated Asp-tRNA(Asn) or Glu-tRNA(Gln) in organisms which lack either or both of asparaginyl-tRNA or glutaminyl-tRNA synthetases. The reaction takes place in the presence of glutamine and ATP through an activated phospho-Asp-tRNA(Asn) or phospho-Glu-tRNA(Gln). The sequence is that of Glutamyl-tRNA(Gln) amidotransferase subunit C from Moraxella catarrhalis (Branhamella catarrhalis).